Consider the following 471-residue polypeptide: Proline--tRNA ligase (471 aa).

Belongs to the class-II aminoacyl-tRNA synthetase family. ProS type 3 subfamily. In terms of assembly, homodimer.

Its subcellular location is the cytoplasm. The catalysed reaction is tRNA(Pro) + L-proline + ATP = L-prolyl-tRNA(Pro) + AMP + diphosphate. Catalyzes the attachment of proline to tRNA(Pro) in a two-step reaction: proline is first activated by ATP to form Pro-AMP and then transferred to the acceptor end of tRNA(Pro). This Archaeoglobus fulgidus (strain ATCC 49558 / DSM 4304 / JCM 9628 / NBRC 100126 / VC-16) protein is Proline--tRNA ligase.